A 178-amino-acid chain; its full sequence is uncharacterized protein (178 aa).

The interval 152-178 (KKLKGAEPKEHQAPNFEPPTEIFPESN) is disordered.

The protein belongs to the EUO family.

This is an uncharacterized protein from Chlamydia pneumoniae (Chlamydophila pneumoniae).